Here is a 293-residue protein sequence, read N- to C-terminus: HTH-type transcriptional regulator ArgP (293 aa).

In terms of domain architecture, HTH lysR-type spans 4 to 60 (PDYRTLQALDAVIRERGFERAAQKLCITQSAVSQRIKQLENLFGQPLLVRTIPPHPT). The H-T-H motif DNA-binding region spans 21–40 (FERAAQKLCITQSAVSQRIK).

Belongs to the LysR transcriptional regulatory family. In terms of assembly, homodimer.

Functionally, controls the transcription of genes involved in arginine and lysine metabolism. This chain is HTH-type transcriptional regulator ArgP, found in Sodalis glossinidius (strain morsitans).